The chain runs to 90 residues: Small ribosomal subunit protein bS20 (90 aa).

Residues 1 to 25 (MANSAQARKRARQAAKANSHNSALR) form a disordered region.

Belongs to the bacterial ribosomal protein bS20 family.

In terms of biological role, binds directly to 16S ribosomal RNA. The polypeptide is Small ribosomal subunit protein bS20 (Burkholderia multivorans (strain ATCC 17616 / 249)).